Here is a 394-residue protein sequence, read N- to C-terminus: Ceramide glucosyltransferase-B (394 aa).

Over 1-10 (MAVLDLALQG) the chain is Lumenal. Residues 11–32 (LAIFGCILFFVLWFMHFLSIVY) form a helical membrane-spanning segment. The Cytoplasmic segment spans residues 33-195 (TRLHLNKKVS…QVYFGTSHPR (163 aa)). A short sequence motif (D1) is located at residue aspartate 92. A short sequence motif (D2) is located at residue aspartate 144. A helical transmembrane segment spans residues 196–215 (SYISANVTGIKCVTGMSCLM). The Lumenal segment spans residues 216-287 (RKEVLDQAGG…KLRINMLPAT (72 aa)). Position 236 (aspartate 236) is a short sequence motif, D3. Aspartate 236 (proton acceptor) is an active-site residue. Positions 272–276 (RMIRW) match the (Q/R)XXRW motif. Residues 288–304 (IICEPISECFVASLIIG) traverse the membrane as a helical segment. Over 305–309 (WAAHH) the chain is Cytoplasmic. A helical membrane pass occupies residues 310 to 328 (IFRWDIMVFFMCHCLAWFI). Over 329–348 (FDYIQLRGVQGGPLNFSKLD) the chain is Lumenal. Residues 349-369 (YAVAWFIRESMTIYIFLSALW) traverse the membrane as a helical segment. Residues 370 to 394 (DPTISWRTGRYRLRCGGTAEEILDV) lie on the Cytoplasmic side of the membrane.

Belongs to the glycosyltransferase 2 family.

The protein localises to the golgi apparatus membrane. It carries out the reaction an N-acylsphing-4-enine + UDP-alpha-D-glucose = a beta-D-glucosyl-(1&lt;-&gt;1')-N-acylsphing-4-enine + UDP + H(+). The catalysed reaction is UDP-alpha-D-xylose + an N-acylsphing-4-enine = a beta-D-xylosyl-(1&lt;-&gt;1')-N-acylsphing-4-enine + UDP + H(+). It catalyses the reaction N-(9Z-octadecenoyl)-sphing-4-enine + UDP-alpha-D-xylose = beta-D-xylosyl-(1&lt;-&gt;1')-N-(9Z-octadecenoyl)-sphing-4-enine + UDP + H(+). It participates in lipid metabolism; sphingolipid metabolism. Functionally, participates in the initial step of the glucosylceramide-based glycosphingolipid/GSL synthetic pathway at the cytosolic surface of the Golgi. Catalyzes the transfer of glucose from UDP-glucose to ceramide to produce glucosylceramide/GlcCer (such as beta-D-glucosyl-(1&lt;-&gt;1')-N-acylsphing-4-enine). Glucosylceramide is the core component of glycosphingolipids/GSLs, amphipathic molecules consisting of a ceramide lipid moiety embedded in the outer leaflet of the membrane, linked to one of hundreds of different externally oriented oligosaccharide structures. Glycosphingolipids are essential components of membrane microdomains that mediate membrane trafficking and signal transduction. They are implicated in many fundamental cellular processes, including growth, differentiation, migration, morphogenesis, cell-to-cell and cell-to-matrix interactions. Catalyzes the synthesis of xylosylceramide/XylCer (such as beta-D-xylosyl-(1&lt;-&gt;1')-N-acylsphing-4-enine) using UDP-Xyl as xylose donor. The protein is Ceramide glucosyltransferase-B (ugcg-b) of Xenopus laevis (African clawed frog).